Reading from the N-terminus, the 400-residue chain is Phosphoglycerate kinase (400 aa).

Residues 22-24 (DLN), arginine 37, 60-63 (HLGR), arginine 119, and arginine 159 contribute to the substrate site. ATP-binding positions include lysine 209, glycine 297, glutamate 328, and 354-357 (GGDS).

The protein belongs to the phosphoglycerate kinase family. As to quaternary structure, monomer.

Its subcellular location is the cytoplasm. The catalysed reaction is (2R)-3-phosphoglycerate + ATP = (2R)-3-phospho-glyceroyl phosphate + ADP. Its pathway is carbohydrate degradation; glycolysis; pyruvate from D-glyceraldehyde 3-phosphate: step 2/5. The chain is Phosphoglycerate kinase from Saccharopolyspora erythraea (strain ATCC 11635 / DSM 40517 / JCM 4748 / NBRC 13426 / NCIMB 8594 / NRRL 2338).